A 349-amino-acid chain; its full sequence is Phenylalanine--tRNA ligase alpha subunit (349 aa).

Mg(2+) is bound at residue glutamate 259.

The protein belongs to the class-II aminoacyl-tRNA synthetase family. Phe-tRNA synthetase alpha subunit type 1 subfamily. As to quaternary structure, tetramer of two alpha and two beta subunits. The cofactor is Mg(2+).

The protein resides in the cytoplasm. It catalyses the reaction tRNA(Phe) + L-phenylalanine + ATP = L-phenylalanyl-tRNA(Phe) + AMP + diphosphate + H(+). This is Phenylalanine--tRNA ligase alpha subunit from Lactobacillus gasseri (strain ATCC 33323 / DSM 20243 / BCRC 14619 / CIP 102991 / JCM 1131 / KCTC 3163 / NCIMB 11718 / NCTC 13722 / AM63).